Reading from the N-terminus, the 126-residue chain is Large ribosomal subunit protein bL12 (126 aa).

This sequence belongs to the bacterial ribosomal protein bL12 family. Homodimer. Part of the ribosomal stalk of the 50S ribosomal subunit. Forms a multimeric L10(L12)X complex, where L10 forms an elongated spine to which 2 to 4 L12 dimers bind in a sequential fashion. Binds GTP-bound translation factors.

Forms part of the ribosomal stalk which helps the ribosome interact with GTP-bound translation factors. Is thus essential for accurate translation. This chain is Large ribosomal subunit protein bL12, found in Corynebacterium diphtheriae (strain ATCC 700971 / NCTC 13129 / Biotype gravis).